We begin with the raw amino-acid sequence, 1023 residues long: StAR-related lipid transfer protein 8 (1023 aa).

2 disordered regions span residues 46–67 and 82–161; these read PMGS…SSCE and TVSL…KVSK. Polar residues predominate over residues 99 to 114; sequence PSSSDRPLLSPTQGQE. S108 carries the phosphoserine modification. The span at 120–130 shows a compositional bias: basic residues; that stretch reads AKKRHRNRSFL. Residues 143–161 are compositionally biased toward polar residues; the sequence is GSQQAEPKHSPATSEKVSK. An Asymmetric dimethylarginine modification is found at R169. Residues S235 and S238 each carry the phosphoserine modification. The span at 387–397 shows a compositional bias: low complexity; it reads PAQAPAEAEPV. Disordered regions lie at residues 387–461 and 467–486; these read PAQA…MNEA and LAGL…VGAS. A compositionally biased stretch (polar residues) spans 441–459; sequence ISDTVASSSELDSSGNSMN. 2 positions are modified to phosphoserine: S498 and S506. The region spanning 573–777 is the Rho-GAP domain; that stretch reads PPLIHVQRTG…HMISDCKKLF (205 aa). Residues 733 to 757 form a disordered region; that stretch reads KKDSPSPRIKSKRSLIGRPGPRDLS. The START domain occupies 809 to 1017; it reads AQAAGVSLSL…RDSFPTLQAA (209 aa).

In terms of assembly, binds both the SH2 and PTB domains of TNS1. As to expression, widely expressed with highest levels in kidney, lung and placenta.

The protein localises to the cell junction. It localises to the focal adhesion. In terms of biological role, accelerates GTPase activity of RHOA and CDC42, but not RAC1. Stimulates the hydrolysis of phosphatidylinositol 4,5-bisphosphate by PLCD1. The polypeptide is StAR-related lipid transfer protein 8 (STARD8) (Homo sapiens (Human)).